A 134-amino-acid polypeptide reads, in one-letter code: MTVSSIFPPAADKTALERGAAIMPRFDANGLVAAIAQHADTGEILMFAWMNDEALKLTLDTGIAHYFSRSRNSLWKKGETSGQLQIVTELRIDCDQDAVLIKVRPQGDGGACHVGFRSCFYRVWENGALVEREA.

A Mg(2+)-binding site is contributed by D93. C94 is a Zn(2+) binding site. Residues D95 and D97 each coordinate Mg(2+). 2 residues coordinate Zn(2+): C112 and C119.

It belongs to the PRA-CH family. Homodimer. The cofactor is Mg(2+). It depends on Zn(2+) as a cofactor.

The protein resides in the cytoplasm. It carries out the reaction 1-(5-phospho-beta-D-ribosyl)-5'-AMP + H2O = 1-(5-phospho-beta-D-ribosyl)-5-[(5-phospho-beta-D-ribosylamino)methylideneamino]imidazole-4-carboxamide. Its pathway is amino-acid biosynthesis; L-histidine biosynthesis; L-histidine from 5-phospho-alpha-D-ribose 1-diphosphate: step 3/9. Catalyzes the hydrolysis of the adenine ring of phosphoribosyl-AMP. In Caulobacter sp. (strain K31), this protein is Phosphoribosyl-AMP cyclohydrolase.